A 1937-amino-acid polypeptide reads, in one-letter code: MLDMMNNSLSYNRPECINFQNNSVQKNVIRVCENEPNTFVGSGIPSQIIGKQGDIYLDRITRIYYKKINGVWVKNVCNNHRCCYPKECKGNPHTKGEKGETGPKGIKGEKGDRGLKGEKGNNGDPGEKGEKGAKGDKGESGEKGAKGDKGDKGDIGEKGEKGDKGDIGEKGEKGDKGDIGEKGDKGDLGEKGEKGDPGQKGEKGDKGDFGDKGDKGDIGEKGDKGDIGDKGEIGNKGDVGEKGSKGDKGIDGTSILFGFGIPSPDLGVDGDLYLDANTDELYGKVNGQWIPITNLKGEKGDKGNKGIDGEKGNKGDTGDKGIDGSKGDKGDTGNKGDIGDKGDQGIKGDIGDKGEKGDIGEKGDKGEKGIKGDKGDIGEKGNKGDIGDKGEKGDKGIDGDKGIKGDKGDIGEKGDKGDIGEKGNKGEKGDKGDKGDIGEKGDKGDTGSKGDKGDKGEKGDKGDKGEKGDIGDKGEKGDKGDKGDKGDKGDKGDKGDTGDKGDKGDKGDKGDKGDNGTSILFGSGPPSPDLGMVGDLYIDVTTDELYGKVNAKMNDNIRVSAKVNVNKQITLQATGQWIPLTNLKGDKGDKGINGNKGDKGEKGDKGNPGTNAGKGEKGDKGDKGDAGTSILFGQGAPDPNQGVDGDIYIDTLTGELYRKVNGLWVPEIDIKGDKGEKGDKGNAGDKGTSGEKGDLGSKGEKGDTGEKGDKGNKGDRGDKGIKGDIGSKGDKGDIGNKGDKGDRGDKGIKGDAGLKGDKGDIGQKGDKGTKGDRGDKGEKGDAGLKGNKGDIGLKGDKGTKGDRGDKGTKGDRGDKGDIGNKGDKGDKGTKGDRGDKGVKGDKGDKGNKGDKGNIGIKGDKGDRSDKGLKGDKGDKGDTGDIGLKGDKGDIGEKGIKGDKGINGSKGYKGDKGDKGSKGDKGNKGDKGSKGDKGDIGIKGSKGDKGDKGDKGSKGDKGDIGSKGDKGDKGDIGTKGDKGTKGDKGIKGDIGSKGDKGSKGDKGSKGDKGDIGSKGDKGDKGDKGSKGDKGSKGIKGDKGDKGTKGDKGIKGDKGDKGIKGDKGDKGDKGDKGIKGDKGDKGDKGDKGDKGTKGDKGDKGDKGSKGDKGDKGDKGDKGEKGSKGDKGDKGDKGDKGDKGDKGDTATCEIVNTDGQTRVSACNTGFVKIEASGYEITTAPNGSSDLAPDPFDPSNVSGMNTKLFGIQNGAFRSGNFTATNLSDIGQYSAVFGYQTTATGSGSIVYGINNSSGISSGSNGSLVGGLANTGGIIRSFSGAEGSIAFGSSEINGIITTGFGAQGSIVGGYSSGGTIATGSGANASEAFGQATTGSLITTGPGAIGSSTRGYSVGNSVITTGLASWASQITGYASNSGIIFSGSGTSTSDIIASVTDSSTLTIGDGSIGSSIRGYCSSGSLISLGPNSNGSIINATVNNFSTLITSSGVNGSSIVARANNSGLISISGNCFGSQFVFNSINGGNITIGSTHAGSQIVGSANTSGIITVVGGLNGTLVAANSSSTSGVRISTSFGSLLAGNATTGGWFRPGQAQGSVIAGQASASGVILTAFNAGCNVIGYANRGSTLGINQNAFGYSVMGYADLNSTITSNALGANACRIMGYALNNSTIFMDSLVAANATDLFGYANNSGVIQAADQCAGALARGVAQNNSSIVTRGNGSMTFGFSNNNSTIFTGQFSDGCFVGGYANSGGTISTGSTSPASHVFGFSNSGSFITTGNNTNASTVFGYATANSTITTGANSNGSLAVGYTGSSGELLGALGQTSFAIGRNNTASGAYSGAIGISSYANMEGSFAHSSFQDTVNPVSAGRSQNIKVMGRKVGTQIVLANGSYATLPYDGYGDVFARLIGSSGTAVGLTFQVTRTAGTYTVAPPITPSGGILWLSPSGVAAPPLAITALGTSGFTITLTDAQNYNCYFDIVNYSS.

N-linked (GlcNAc...) asparagine; by host glycosylation is found at Asn6 and Asn21. Disordered regions lie at residues 88 to 248 (CKGN…KGDK), 294 to 531 (NLKG…PDLG), 583 to 643 (LKGD…NQGV), and 670 to 1144 (IKGD…DTAT). Collagen-like domains lie at 102–161 (GPKG…KGEK), 168–227 (GEKG…KGDI), 297–356 (GEKG…KGEK), 363–422 (GDKG…IGEK), and 453–512 (GDKG…KGDK). Residues 296 to 514 (KGEKGDKGNK…DKGDKGDKGD (219 aa)) are compositionally biased toward basic and acidic residues. Asn515 carries N-linked (GlcNAc...) asparagine; by host glycosylation. 3 stretches are compositionally biased toward basic and acidic residues: residues 584–605 (KGDKGDKGINGNKGDKGEKGDK), 614–625 (KGEKGDKGDKGD), and 670–899 (IKGD…KGDK). 5 consecutive Collagen-like domains span residues 672-731 (GDKG…KGDK), 735-854 (GNKG…KGNI), 867-926 (GLKG…KGDK), 936-995 (GIKG…KGDK), and 1023-1142 (GSKG…KGDT). An N-linked (GlcNAc...) asparagine; by host glycan is attached at Asn902. The segment covering 907–1141 (YKGDKGDKGS…DKGDKGDKGD (235 aa)) has biased composition (basic and acidic residues). Residues Asn1178, Asn1192, Asn1212, Asn1217, Asn1245, Asn1246, Asn1255, Asn1317, Asn1422, Asn1427, Asn1432, Asn1443, Asn1452, Asn1477, Asn1494, Asn1506, Asn1513, Asn1533, Asn1598, Asn1619, Asn1620, Asn1632, Asn1641, Asn1663, Asn1664, Asn1672, Asn1682, Asn1683, Asn1732, Asn1735, Asn1746, Asn1756, Asn1784, Asn1842, and Asn1934 are each glycosylated (N-linked (GlcNAc...) asparagine; by host).

In terms of processing, may be hydroxylated on lysine by the viral-encoded procollagen-lysine,2-oxoglutarate 5-dioxygenase.

It is found in the virion. May participate in the formation of a layer of cross-linked glycosylated fibrils at the viral surface thus giving it a hairy-like appearance. The polypeptide is Collagen-like protein 7 (Acanthamoeba polyphaga mimivirus (APMV)).